A 351-amino-acid chain; its full sequence is Spindolin (351 aa).

A signal peptide spans 1–20; sequence MNKFYYICIYINILYVCVSG.

In terms of assembly, homodimer; disulfide-linked.

This protein is a spindle body protein. The sequence is that of Spindolin from Lepidoptera (butterflies and moths).